The primary structure comprises 273 residues: Shikimate dehydrogenase (NADP(+)) (273 aa).

Shikimate contacts are provided by residues 15 to 17 (SLS) and Thr62. Lys66 acts as the Proton acceptor in catalysis. Glu78 is a binding site for NADP(+). Shikimate is bound by residues Asn87 and Asp102. Residues 126–130 (GAGGA), 150–155 (NRTIEK), and Ile217 contribute to the NADP(+) site. A shikimate-binding site is contributed by Tyr219. Gly240 is an NADP(+) binding site.

The protein belongs to the shikimate dehydrogenase family. In terms of assembly, homodimer.

It carries out the reaction shikimate + NADP(+) = 3-dehydroshikimate + NADPH + H(+). Its pathway is metabolic intermediate biosynthesis; chorismate biosynthesis; chorismate from D-erythrose 4-phosphate and phosphoenolpyruvate: step 4/7. In terms of biological role, involved in the biosynthesis of the chorismate, which leads to the biosynthesis of aromatic amino acids. Catalyzes the reversible NADPH linked reduction of 3-dehydroshikimate (DHSA) to yield shikimate (SA). The polypeptide is Shikimate dehydrogenase (NADP(+)) (Nitrosopumilus maritimus (strain SCM1)).